The following is a 1332-amino-acid chain: Delta-poly-L-ornithine synthetase (1332 aa).

L-ornithine contacts are provided by Asp-217, Glu-221, and Thr-304. D-ornithine is bound by residues Glu-221, Thr-304, Gly-306, and Thr-308. L-ornithine-binding residues include Val-312 and Ser-313. Ser-313 is a binding site for D-ornithine. Residues 524–601 enclose the Carrier domain; that stretch reads QPQNPAEEIL…AIAALMLEQP (78 aa). Ser-560 is modified (O-(pantetheine 4'-phosphoryl)serine). Helical transmembrane passes span 629–649, 664–684, 868–888, 908–928, 1120–1140, and 1151–1171; these read LVTI…PFFT, AIAL…VLSI, VSAL…FLLV, LYYF…TAVI, IVLP…DVID, and LVAL…IVAL.

It belongs to the ATP-dependent AMP-binding enzyme family. It depends on pantetheine 4'-phosphate as a cofactor.

Its subcellular location is the cell membrane. It catalyses the reaction n L-ornithine + n ATP + H2O = N(5)-(L-ornithyl)-[N(5)-(L-ornithyl)]n-1 + n AMP + n diphosphate + n H(+). The enzyme catalyses n D-ornithine + n ATP + H2O = N(5)-(D-ornithyl)-[N(5)-(D-ornithyl)]n-1 + n AMP + n diphosphate + n H(+). Functionally, catalyzes the polymerization of L-ornithine, generating poly-L-ornithine composed of 7-12 amino acid units joined via isopeptide bonds between the carboxylate and the side chain amine. This polymer exhibits potent antifungal activity and thus may have a potential role in survival benefit for A.baumannii. The reaction occurs via ATP-dependent adenylation of the substrate. Can also adenylate D-ornithine with similar efficiency and thus may produce D-ornithine polymers. The polypeptide is Delta-poly-L-ornithine synthetase (Acinetobacter baumannii (strain AB307-0294)).